Consider the following 388-residue polypeptide: Succinate--CoA ligase [ADP-forming] subunit beta (388 aa).

Positions 9–244 (KEILRKFGVA…LDEEDPAEIE (236 aa)) constitute an ATP-grasp domain. Residues Lys46, 53–55 (GRG), Glu99, Ala102, and Glu107 each bind ATP. Mg(2+) is bound by residues Asn199 and Asp213. Residues Asn264 and 321–323 (GIM) each bind substrate.

This sequence belongs to the succinate/malate CoA ligase beta subunit family. Heterotetramer of two alpha and two beta subunits. Requires Mg(2+) as cofactor.

It catalyses the reaction succinate + ATP + CoA = succinyl-CoA + ADP + phosphate. The catalysed reaction is GTP + succinate + CoA = succinyl-CoA + GDP + phosphate. Its pathway is carbohydrate metabolism; tricarboxylic acid cycle; succinate from succinyl-CoA (ligase route): step 1/1. Its function is as follows. Succinyl-CoA synthetase functions in the citric acid cycle (TCA), coupling the hydrolysis of succinyl-CoA to the synthesis of either ATP or GTP and thus represents the only step of substrate-level phosphorylation in the TCA. The beta subunit provides nucleotide specificity of the enzyme and binds the substrate succinate, while the binding sites for coenzyme A and phosphate are found in the alpha subunit. The chain is Succinate--CoA ligase [ADP-forming] subunit beta from Burkholderia cenocepacia (strain ATCC BAA-245 / DSM 16553 / LMG 16656 / NCTC 13227 / J2315 / CF5610) (Burkholderia cepacia (strain J2315)).